A 157-amino-acid polypeptide reads, in one-letter code: Endoribonuclease YbeY (157 aa).

Zn(2+)-binding residues include histidine 111, histidine 115, and histidine 121.

Belongs to the endoribonuclease YbeY family. The cofactor is Zn(2+).

The protein localises to the cytoplasm. Single strand-specific metallo-endoribonuclease involved in late-stage 70S ribosome quality control and in maturation of the 3' terminus of the 16S rRNA. The sequence is that of Endoribonuclease YbeY from Pseudomonas entomophila (strain L48).